We begin with the raw amino-acid sequence, 92 residues long: Small ribosomal subunit protein uS19c (92 aa).

The protein belongs to the universal ribosomal protein uS19 family.

It is found in the plastid. The protein resides in the chloroplast. Its function is as follows. Protein S19 forms a complex with S13 that binds strongly to the 16S ribosomal RNA. In Panax ginseng (Korean ginseng), this protein is Small ribosomal subunit protein uS19c.